We begin with the raw amino-acid sequence, 109 residues long: Aquaporin-2 (109 aa).

Over 1 to 6 the chain is Cytoplasmic; the sequence is SIAFSR. A helical membrane pass occupies residues 7-27; the sequence is AVFAEFLATLIFVFFGLGSAL. The Extracellular segment spans residues 28 to 35; that stretch reads NWQQSLPS. The helical transmembrane segment at 36-54 threads the bilayer; the sequence is VLQIAMAFGLAIGTLVQAL. Residues 55 to 59 are Cytoplasmic-facing; the sequence is GHISG. Residues 60 to 69 constitute an intramembrane region (discontinuously helical); the sequence is AHINPAVTVA. The NPA 1 motif lies at 63-65; that stretch reads NPA. The Cytoplasmic portion of the chain corresponds to 70 to 80; sequence CLVGCHVSFLR. A helical membrane pass occupies residues 81-102; sequence AAFYVAAQLLGAVAGAALLHEV. Topologically, residues 103–109 are extracellular; sequence TPSDVRG.

The protein belongs to the MIP/aquaporin (TC 1.A.8) family. In terms of assembly, homotetramer. Post-translationally, serine phosphorylation is necessary and sufficient for expression at the apical membrane. Endocytosis is not phosphorylation-dependent. N-glycosylated.

The protein localises to the apical cell membrane. It is found in the basolateral cell membrane. It localises to the cell membrane. The protein resides in the cytoplasmic vesicle membrane. Its subcellular location is the golgi apparatus. The protein localises to the trans-Golgi network membrane. The enzyme catalyses H2O(in) = H2O(out). It carries out the reaction glycerol(in) = glycerol(out). Functionally, forms a water-specific channel that provides the plasma membranes of renal collecting duct with high permeability to water, thereby permitting water to move in the direction of an osmotic gradient. Plays an essential role in renal water homeostasis. Could also be permeable to glycerol. The polypeptide is Aquaporin-2 (Talpa europaea (European mole)).